A 264-amino-acid chain; its full sequence is 3-methyl-2-oxobutanoate hydroxymethyltransferase (264 aa).

Mg(2+)-binding residues include D45 and D84. 3-methyl-2-oxobutanoate-binding positions include D45–S46, D84, and K113. Position 115 (E115) interacts with Mg(2+). The Proton acceptor role is filled by E182.

This sequence belongs to the PanB family. Homodecamer; pentamer of dimers. Mg(2+) is required as a cofactor.

It is found in the cytoplasm. The enzyme catalyses 3-methyl-2-oxobutanoate + (6R)-5,10-methylene-5,6,7,8-tetrahydrofolate + H2O = 2-dehydropantoate + (6S)-5,6,7,8-tetrahydrofolate. Its pathway is cofactor biosynthesis; (R)-pantothenate biosynthesis; (R)-pantoate from 3-methyl-2-oxobutanoate: step 1/2. In terms of biological role, catalyzes the reversible reaction in which hydroxymethyl group from 5,10-methylenetetrahydrofolate is transferred onto alpha-ketoisovalerate to form ketopantoate. This is 3-methyl-2-oxobutanoate hydroxymethyltransferase from Caldicellulosiruptor saccharolyticus (strain ATCC 43494 / DSM 8903 / Tp8T 6331).